Here is a 467-residue protein sequence, read N- to C-terminus: Serine/threonine-protein phosphatase 2A 56 kDa regulatory subunit epsilon isoform (467 aa).

The interval 1–40 (MSSAPTTPPSVDKVDGFSRKSVRKARQKRSQSSSQFRSQG) is disordered. Ser2 carries the N-acetylserine modification. A Phosphothreonine modification is found at Thr7. Residues 20–29 (KSVRKARQKR) are compositionally biased toward basic residues. Ser30, Ser32, and Ser34 each carry phosphoserine. Over residues 30 to 40 (SQSSSQFRSQG) the composition is skewed to low complexity.

It belongs to the phosphatase 2A regulatory subunit B56 family. Found in a complex with at least ARL2, PPP2CB; PPP2R1A, PPP2R2A, PPP2R5E and TBCD. PP2A consists of a common heterodimeric core enzyme, composed of a 36 kDa catalytic subunit (subunit C) and a 65 kDa constant regulatory subunit (PR65 or subunit A), that associates with a variety of regulatory subunits. Proteins that associate with the core dimer include three families of regulatory subunits B (the R2/B/PR55/B55, R3/B''/PR72/PR130/PR59 and R5/B'/B56 families), the 48 kDa variable regulatory subunit, viral proteins, and cell signaling molecules. Interacts with SGO1. Post-translationally, phosphorylated on serine residues.

The protein localises to the cytoplasm. Its function is as follows. The B regulatory subunit might modulate substrate selectivity and catalytic activity, and might also direct the localization of the catalytic enzyme to a particular subcellular compartment. This Homo sapiens (Human) protein is Serine/threonine-protein phosphatase 2A 56 kDa regulatory subunit epsilon isoform (PPP2R5E).